The following is a 266-amino-acid chain: Killer cell lectin-like receptor 8 (266 aa).

Residues 1–44 (MSEQEVTFPTMRFHKSSGLNSQVRLEGTQRSRKAGLRVCSVPWQ) lie on the Cytoplasmic side of the membrane. The chain crosses the membrane as a helical; Signal-anchor for type II membrane protein span at residues 45–66 (LIVIALGILCSLRLVIVAVFVT). The Extracellular portion of the chain corresponds to 67 to 266 (KFFQYSQHKQ…CGKKLDKFPD (200 aa)). N-linked (GlcNAc...) asparagine glycosylation is found at asparagine 87 and asparagine 104. Residues 143–261 (GVKYWFCYGT…PYYCICGKKL (119 aa)) form the C-type lectin domain. Intrachain disulfides connect cysteine 149/cysteine 154, cysteine 167/cysteine 255, cysteine 171/cysteine 257, and cysteine 236/cysteine 249.

Homodimer; disulfide-linked. Interacts with the adapter protein TYROBP/DAP12; the interaction leads to natural killer cell activation.

It is found in the cell membrane. Receptor on natural killer (NK) cells for class I MHC. In Mus musculus (Mouse), this protein is Killer cell lectin-like receptor 8 (Klra8).